A 146-amino-acid polypeptide reads, in one-letter code: MKLHELKPAEGSRKQRNRVGRGIGSGNGKTAGKGHKGQNARSGGGVRPGFEGGQNPLFRRLPKRGFTNINRKEYAIVNLDALNRFEDGAEVTTALLLETGLVSNEKAGIKVLGNGTLNKKLTVKAHKFSASAKEAIENAGGTTEVI.

Over residues M1–R13 the composition is skewed to basic and acidic residues. The tract at residues M1–R60 is disordered. Composition is skewed to gly residues over residues R21–A31 and S42–G52.

It belongs to the universal ribosomal protein uL15 family. As to quaternary structure, part of the 50S ribosomal subunit.

Binds to the 23S rRNA. In Lysinibacillus sphaericus (strain C3-41), this protein is Large ribosomal subunit protein uL15.